Consider the following 114-residue polypeptide: T cell receptor beta variable 5-4 (114 aa).

The first 21 residues, 1–21 (MGPGLLCWALLCLLGAGSVET), serve as a signal peptide directing secretion. In terms of domain architecture, Ig-like spans 22-114 (GVTQSPTHLI…SALYLCASSL (93 aa)). C42 and C110 are oxidised to a cystine. An N-linked (GlcNAc...) asparagine glycan is attached at N90.

In terms of assembly, alpha-beta TR is a heterodimer composed of an alpha and beta chain; disulfide-linked. The alpha-beta TR is associated with the transmembrane signaling CD3 coreceptor proteins to form the TR-CD3 (TcR or TCR). The assembly of alpha-beta TR heterodimers with CD3 occurs in the endoplasmic reticulum where a single alpha-beta TR heterodimer associates with one CD3D-CD3E heterodimer, one CD3G-CD3E heterodimer and one CD247 homodimer forming a stable octameric structure. CD3D-CD3E and CD3G-CD3E heterodimers preferentially associate with TR alpha and TR beta chains, respectively. The association of the CD247 homodimer is the last step of TcR assembly in the endoplasmic reticulum and is required for transport to the cell surface.

The protein resides in the cell membrane. In terms of biological role, v region of the variable domain of T cell receptor (TR) beta chain that participates in the antigen recognition. Alpha-beta T cell receptors are antigen specific receptors which are essential to the immune response and are present on the cell surface of T lymphocytes. Recognize peptide-major histocompatibility (MH) (pMH) complexes that are displayed by antigen presenting cells (APC), a prerequisite for efficient T cell adaptive immunity against pathogens. Binding of alpha-beta TR to pMH complex initiates TR-CD3 clustering on the cell surface and intracellular activation of LCK that phosphorylates the ITAM motifs of CD3G, CD3D, CD3E and CD247 enabling the recruitment of ZAP70. In turn ZAP70 phosphorylates LAT, which recruits numerous signaling molecules to form the LAT signalosome. The LAT signalosome propagates signal branching to three major signaling pathways, the calcium, the mitogen-activated protein kinase (MAPK) kinase and the nuclear factor NF-kappa-B (NF-kB) pathways, leading to the mobilization of transcription factors that are critical for gene expression and essential for T cell growth and differentiation. The T cell repertoire is generated in the thymus, by V-(D)-J rearrangement. This repertoire is then shaped by intrathymic selection events to generate a peripheral T cell pool of self-MH restricted, non-autoaggressive T cells. Post-thymic interaction of alpha-beta TR with the pMH complexes shapes TR structural and functional avidity. The polypeptide is T cell receptor beta variable 5-4 (Homo sapiens (Human)).